Here is a 496-residue protein sequence, read N- to C-terminus: Neuronal acetylcholine receptor subunit beta-4 (496 aa).

An N-terminal signal peptide occupies residues 1 to 19 (MRSALPLVLFSLVALCGRG). The Extracellular portion of the chain corresponds to 20 to 236 (DCRVANAEEK…IIKRKPLFYT (217 aa)). Residues Asn36, Asn93, Asn138, and Asn166 are each glycosylated (N-linked (GlcNAc...) asparagine). A disulfide bridge links Cys153 with Cys167. The chain crosses the membrane as a helical span at residues 237 to 257 (INLIIPCVLITSLAILVFYLP). Topologically, residues 258-265 (SDCGEKMT) are cytoplasmic. Glu262 contributes to the Na(+) binding site. A helical transmembrane segment spans residues 266–286 (LCISVLLALTVFLLLISKIVP). Over 287-298 (PTSLNVPLIGKY) the chain is Extracellular. The chain crosses the membrane as a helical span at residues 299-319 (LMFTMVLVTFSIVTSVCVLNV). The Cytoplasmic segment spans residues 320–464 (HHRSPSTHTM…WKYVAMVVDR (145 aa)). The chain crosses the membrane as a helical span at residues 465–485 (LFLWVFVVVCVLGTVGLFLPP). Residues 486–496 (LFQTHTPSEEP) lie on the Extracellular side of the membrane.

This sequence belongs to the ligand-gated ion channel (TC 1.A.9) family. Acetylcholine receptor (TC 1.A.9.1) subfamily. Beta-4/CHRNB4 sub-subfamily. In terms of assembly, neuronal AChR is composed of two different types of subunits: alpha and beta. CHRNB4/Beta-4 subunit can be combined to CHRNA2/alpha-2, CHRNA3/alpha-3 or CHRNA4/alpha-4, CHRNA5/alpha-5 and CHRNB3/beta-3 to give rise to functional receptors. Forms stoichiometries such as (CHRNA3)2:(CHRNB4)3 or (CHRNA3:CHRNB4)2:CHRNB3. Interacts with RIC3; which is required for proper folding and assembly. Interacts with LYPD6.

It localises to the synaptic cell membrane. The protein resides in the cell membrane. It catalyses the reaction Ca(2+)(in) = Ca(2+)(out). It carries out the reaction K(+)(in) = K(+)(out). The enzyme catalyses Na(+)(in) = Na(+)(out). In terms of biological role, component of neuronal acetylcholine receptors (nAChRs) that function as pentameric, ligand-gated cation channels with high calcium permeability among other activities. nAChRs are excitatory neurotrasnmitter receptors formed by a collection of nAChR subunits known to mediate synaptic transmission in the nervous system and the neuromuscular junction. Each nAchR subunit confers differential attributes to channel properties, including activation, deactivation and desensitization kinetics, pH sensitivity, cation permeability, and binding to allosteric modulators. CHRNB4 forms heteropentameric neuronal acetylcholine receptors with CHRNA2, CHRNA3 and CHRNA4, as well as CHRNA5 and CHRNB3 as accesory subunits. CHRNA3:CHRNB4 being predominant in neurons of the autonomic ganglia, it is known as ganglionic nicotinic receptor. CHRNA3:CHRNB4 or CHRNA3:CHRNA5:CHRNB4 play also an important role in the habenulo-interpeduncular tract, modulating the mesolimbic dopamine system and affecting reward circuits and addiction. Hypothalamic CHRNA3:CHRNB4 nAChR activation by nicotine leads to activation of POMC neurons and a decrease in food intake. The sequence is that of Neuronal acetylcholine receptor subunit beta-4 (CHRNB4) from Bos taurus (Bovine).